A 194-amino-acid chain; its full sequence is Imidazoleglycerol-phosphate dehydratase (194 aa).

This sequence belongs to the imidazoleglycerol-phosphate dehydratase family.

It is found in the cytoplasm. It catalyses the reaction D-erythro-1-(imidazol-4-yl)glycerol 3-phosphate = 3-(imidazol-4-yl)-2-oxopropyl phosphate + H2O. Its pathway is amino-acid biosynthesis; L-histidine biosynthesis; L-histidine from 5-phospho-alpha-D-ribose 1-diphosphate: step 6/9. This is Imidazoleglycerol-phosphate dehydratase from Thermoanaerobacter sp. (strain X514).